The following is a 453-amino-acid chain: Zinc finger protein Pegasus (453 aa).

3 C2H2-type zinc fingers span residues 101–123, 129–151, and 157–180; these read LKCRYCNYASKGTARLIEHIRIH, HRCHLCPFASAYERHLEAHMRSH, and YKCELCSFRCSDRSNLSHHRRRKH. The span at 279–293 shows a compositional bias: polar residues; that stretch reads GQLSSLPPDTQNPAS. Positions 279-375 are disordered; the sequence is GQLSSLPPDT…QPSTPAPALP (97 aa). Positions 315-332 are enriched in low complexity; sequence CSSAVSTSVAQSSSPASP. Polar residues predominate over residues 356–368; that stretch reads RTSTPSISNSQPS. 2 consecutive C2H2-type zinc fingers follow at residues 383–405 and 411–438; these read HHCQHCDMYFADNILYTIHMGCH and FQCNICGCKCKNKYDFACHFARGACCQH.

The protein belongs to the Ikaros C2H2-type zinc-finger protein family. As to quaternary structure, probably self-associates.

Its subcellular location is the nucleus. Its function is as follows. Transcriptional repressor that binds the core 5'GNNTGTNG-3' DNA consensus sequence. The chain is Zinc finger protein Pegasus (ikzf5) from Xenopus laevis (African clawed frog).